The following is a 407-amino-acid chain: Nuclear hormone receptor family member nhr-86 (407 aa).

A DNA-binding region (nuclear receptor) is located at residues 21–96 (KSTCSICRED…VGMNPAGVQQ (76 aa)). NR C4-type zinc fingers lie at residues 24–44 (CSIC…CRAC) and 60–79 (CRGN…CRSC). Positions 130–405 (AQSALVEDLH…KDFYDLVNGK (276 aa)) constitute an NR LBD domain. The segment at 394 to 405 (PPKDFYDLVNGK) is AF-2.

It belongs to the nuclear hormone receptor family. As to expression, expressed in intestinal epithelial cells, excretory gland cells and in several head neurons.

It localises to the nucleus. Nuclear receptor which acts as a transcription activator. Binds small molecule ligands, such as phenazine 1-carboxamide (PCN), a pathogen-derived metabolite, leading to modulation of innate immune responses against virulent pathogens. On exposure to exogenous PCN, P.aeruginosa and other xenobiotic immunostimulant such as R24, activates immune response genes, including irg-4, irg-5, mul-1, drd-50, cyp-35C1 and ugt-30, probably via direct interaction with their promoters, and independent of the p38 MAPK pmk-1 pathway. Exhibits higher affinity to R24 than PCN and thus induces stronger immune response. Binds its own promoter thereby autoregulating its expression in the head hypodermis and the pharynx. Possibly plays a role in lipid storage or catabolism. This is Nuclear hormone receptor family member nhr-86 (nhr-86) from Caenorhabditis elegans.